Reading from the N-terminus, the 55-residue chain is Conotoxin Cal14.14 (55 aa).

Positions 1–20 (MFRLGVFLLTFLLLVSMATS) are cleaved as a signal peptide. Cystine bridges form between cysteine 34-cysteine 48 and cysteine 38-cysteine 52.

As to expression, expressed by the venom duct.

Its subcellular location is the secreted. Functionally, probable neurotoxin. The polypeptide is Conotoxin Cal14.14 (Californiconus californicus (California cone)).